The sequence spans 530 residues: Inactive ubiquitin carboxyl-terminal hydrolase 17-like protein 8 (530 aa).

One can recognise a USP domain in the interval 80 to 375 (AGLQNMGNTC…QAYVLFYIQK (296 aa)). Positions 382–392 (SESVSRGREPR) are enriched in basic and acidic residues. Disordered stretches follow at residues 382–412 (SESVSRGREPRALGAEDTDRPATQGELKRDH) and 493–530 (NSTDQESMNTGTLASLQGRTRRSKGKNKHSKRSLLVCQ). The span at 495–510 (TDQESMNTGTLASLQG) shows a compositional bias: polar residues. Basic residues predominate over residues 511-524 (RTRRSKGKNKHSKR).

This sequence belongs to the peptidase C19 family. USP17 subfamily.

Its subcellular location is the nucleus. The protein resides in the endoplasmic reticulum. The protein is Inactive ubiquitin carboxyl-terminal hydrolase 17-like protein 8 (USP17L8) of Homo sapiens (Human).